We begin with the raw amino-acid sequence, 215 residues long: UPF0502 protein YceH (215 aa).

It belongs to the UPF0502 family.

The polypeptide is UPF0502 protein YceH (Salmonella paratyphi C (strain RKS4594)).